Consider the following 317-residue polypeptide: tRNA dimethylallyltransferase (317 aa).

An ATP-binding site is contributed by 19-26; it reads GPTASGKS. 21–26 lines the substrate pocket; it reads TASGKS. Residues 49–52 form an interaction with substrate tRNA region; the sequence is DSAQ.

This sequence belongs to the IPP transferase family. In terms of assembly, monomer. It depends on Mg(2+) as a cofactor.

It catalyses the reaction adenosine(37) in tRNA + dimethylallyl diphosphate = N(6)-dimethylallyladenosine(37) in tRNA + diphosphate. Catalyzes the transfer of a dimethylallyl group onto the adenine at position 37 in tRNAs that read codons beginning with uridine, leading to the formation of N6-(dimethylallyl)adenosine (i(6)A). The protein is tRNA dimethylallyltransferase of Erythrobacter litoralis (strain HTCC2594).